The primary structure comprises 332 residues: Ketol-acid reductoisomerase (NADP(+)) (332 aa).

Residues 3–183 (TEIFYDADAD…GGARAGVIKT (181 aa)) form the KARI N-terminal Rossmann domain. NADP(+)-binding positions include 26–29 (YGSQ), Ser-52, Ser-54, and 84–87 (DTKQ). His-109 is a catalytic residue. Gly-135 provides a ligand contact to NADP(+). Positions 184–329 (TFTEETETDL…KKLRSLMSWT (146 aa)) constitute a KARI C-terminal knotted domain. Residues Asp-192, Glu-196, Glu-228, and Glu-232 each coordinate Mg(2+). Residue Ser-253 participates in substrate binding.

This sequence belongs to the ketol-acid reductoisomerase family. Mg(2+) is required as a cofactor.

The catalysed reaction is (2R)-2,3-dihydroxy-3-methylbutanoate + NADP(+) = (2S)-2-acetolactate + NADPH + H(+). It carries out the reaction (2R,3R)-2,3-dihydroxy-3-methylpentanoate + NADP(+) = (S)-2-ethyl-2-hydroxy-3-oxobutanoate + NADPH + H(+). Its pathway is amino-acid biosynthesis; L-isoleucine biosynthesis; L-isoleucine from 2-oxobutanoate: step 2/4. It participates in amino-acid biosynthesis; L-valine biosynthesis; L-valine from pyruvate: step 2/4. In terms of biological role, involved in the biosynthesis of branched-chain amino acids (BCAA). Catalyzes an alkyl-migration followed by a ketol-acid reduction of (S)-2-acetolactate (S2AL) to yield (R)-2,3-dihydroxy-isovalerate. In the isomerase reaction, S2AL is rearranged via a Mg-dependent methyl migration to produce 3-hydroxy-3-methyl-2-ketobutyrate (HMKB). In the reductase reaction, this 2-ketoacid undergoes a metal-dependent reduction by NADPH to yield (R)-2,3-dihydroxy-isovalerate. In Saccharopolyspora erythraea (strain ATCC 11635 / DSM 40517 / JCM 4748 / NBRC 13426 / NCIMB 8594 / NRRL 2338), this protein is Ketol-acid reductoisomerase (NADP(+)).